Consider the following 148-residue polypeptide: Prefoldin subunit 2 (148 aa).

Residues 87–114 (KDGLEEVVRKLYETLEKKKKDLTEFEAK) are a coiled coil. A compositionally biased stretch (basic and acidic residues) spans 122–134 (QEDNKEGGNKKEG). The disordered stretch occupies residues 122 to 148 (QEDNKEGGNKKEGNAQGVLVGAASSSQ).

This sequence belongs to the prefoldin subunit beta family. As to quaternary structure, heterohexamer of two PFD-alpha type and four PFD-beta type subunits forming prefoldin co-chaperone complex. Interacts with LSM8, a specific subunit of the LSM2-8 complex, which is a core component of the spliceosome.

Its subcellular location is the cytoplasm. It is found in the nucleus. In terms of biological role, binds specifically to cytosolic chaperonin (c-CPN) and transfers target proteins to it. Binds to nascent polypeptide chain and promotes folding in an environment in which there are many competing pathways for nonnative proteins. Together with other chaperonins, contribute to the regulation of gene expression by modulating the spliceosome function on pre-mRNA splicing post-transcriptionally by acting as a co-chaperone of Hsp90 to control levels of LSM8. Required for microtubules (MTs) organization and dynamicity. Involved in the process leading to microtubules dissociation in response to gibberellic acid (GA) probably due to the DELLA proteins-mediated translocation of the prefoldin co-chaperone complex from the cytoplasm to the nucleus. The protein is Prefoldin subunit 2 of Arabidopsis thaliana (Mouse-ear cress).